The sequence spans 277 residues: Orotidine 5'-phosphate decarboxylase (277 aa).

Lys93 (proton donor) is an active-site residue.

Belongs to the OMP decarboxylase family. Type 2 subfamily.

The catalysed reaction is orotidine 5'-phosphate + H(+) = UMP + CO2. Its pathway is pyrimidine metabolism; UMP biosynthesis via de novo pathway; UMP from orotate: step 2/2. The chain is Orotidine 5'-phosphate decarboxylase from Haloarcula marismortui (strain ATCC 43049 / DSM 3752 / JCM 8966 / VKM B-1809) (Halobacterium marismortui).